Here is a 189-residue protein sequence, read N- to C-terminus: Glycerol-3-phosphate acyltransferase (189 aa).

The next 5 helical transmembrane spans lie at Met-1–Leu-21, Lys-50–Ala-70, Ala-81–Gly-101, Met-111–Phe-131, and Leu-151–Val-171.

This sequence belongs to the PlsY family. In terms of assembly, probably interacts with PlsX.

The protein resides in the cell inner membrane. It carries out the reaction an acyl phosphate + sn-glycerol 3-phosphate = a 1-acyl-sn-glycero-3-phosphate + phosphate. Its pathway is lipid metabolism; phospholipid metabolism. In terms of biological role, catalyzes the transfer of an acyl group from acyl-phosphate (acyl-PO(4)) to glycerol-3-phosphate (G3P) to form lysophosphatidic acid (LPA). This enzyme utilizes acyl-phosphate as fatty acyl donor, but not acyl-CoA or acyl-ACP. The polypeptide is Glycerol-3-phosphate acyltransferase (Pseudomonas entomophila (strain L48)).